A 55-amino-acid chain; its full sequence is Antiviral protein GAP-31 (55 aa).

The segment at 29 to 55 (KPEGNSHGIPSLRKSSDDPGSSFVVAG) is disordered.

Belongs to the ribosome-inactivating protein family. Type 1 RIP subfamily.

The catalysed reaction is Endohydrolysis of the N-glycosidic bond at one specific adenosine on the 28S rRNA.. In terms of biological role, single-chain ribosome-inactivating protein, possessing high antiviral potency and low toxicity to normal cells in culture and to intact animals. Capable of inhibiting HIV-1 infection and replication. The sequence is that of Antiviral protein GAP-31 from Suregada multiflora (False lime).